The sequence spans 260 residues: Membrane protein insertase YidC 1 (260 aa).

An N-terminal signal peptide occupies residues 1–22 (MLKSYRAVLVSLSLLLVFVLSG). Residue Cys23 is the site of N-palmitoyl cysteine attachment. Residue Cys23 is the site of S-diacylglycerol cysteine attachment. The next 5 helical transmembrane spans lie at 29-49 (IDAH…SFMI), 52-72 (VAHH…TLVI), 133-153 (LAGC…YYAI), 164-184 (FLWV…IAAL), and 213-233 (MPAM…LYWI).

The protein belongs to the OXA1/ALB3/YidC family. Type 2 subfamily.

Its subcellular location is the cell membrane. Functionally, required for the insertion and/or proper folding and/or complex formation of integral membrane proteins into the membrane. Involved in integration of membrane proteins that insert both dependently and independently of the Sec translocase complex, as well as at least some lipoproteins. This Bacillus anthracis protein is Membrane protein insertase YidC 1.